The following is a 251-amino-acid chain: uncharacterized protein (251 aa).

Belongs to the FAM243 family.

This is an uncharacterized protein from Bos taurus (Bovine).